The following is a 646-amino-acid chain: Tyrosine-protein kinase MasK (646 aa).

At M1–T415 the chain is on the periplasmic side. One can recognise a Protein kinase domain in the interval Y25–L300. ATP contacts are provided by residues L31 to I39 and K57. The Proton acceptor role is filled by D163. The segment at T373 to G410 is disordered. The helical transmembrane segment at L416–G433 threads the bilayer. Residues Y434–Q646 lie on the Cytoplasmic side of the membrane. Residues A521–S547 are disordered. The segment covering V527 to A536 has biased composition (acidic residues).

Belongs to the protein kinase superfamily. Tyr protein kinase family. As to quaternary structure, interacts with MglA. Autophosphorylated.

It localises to the cell inner membrane. The enzyme catalyses L-tyrosyl-[protein] + ATP = O-phospho-L-tyrosyl-[protein] + ADP + H(+). Its function is as follows. Essential for growth. Interacts with MglA to control social gliding motility. The polypeptide is Tyrosine-protein kinase MasK (masK) (Myxococcus xanthus (strain DK1622)).